Here is a 230-residue protein sequence, read N- to C-terminus: UPF0173 metal-dependent hydrolase OEOE_1287 (230 aa).

Belongs to the UPF0173 family.

The polypeptide is UPF0173 metal-dependent hydrolase OEOE_1287 (Oenococcus oeni (strain ATCC BAA-331 / PSU-1)).